The sequence spans 93 residues: Protein translocase subunit SecE (93 aa).

Positions 1 to 33 (MTDALGSIDMPDAEDETREKKARKGGKRGKKGP) are disordered. Basic residues predominate over residues 20 to 33 (KKARKGGKRGKKGP). A helical membrane pass occupies residues 64–84 (TVVIVFVVIMIGLVTVIDFGF).

Belongs to the SecE/SEC61-gamma family. As to quaternary structure, component of the Sec protein translocase complex. Heterotrimer consisting of SecY, SecE and SecG subunits. The heterotrimers can form oligomers, although 1 heterotrimer is thought to be able to translocate proteins. Interacts with the ribosome. Interacts with SecDF, and other proteins may be involved. Interacts with SecA.

It localises to the cell membrane. Essential subunit of the Sec protein translocation channel SecYEG. Clamps together the 2 halves of SecY. May contact the channel plug during translocation. The sequence is that of Protein translocase subunit SecE from Streptomyces virginiae (Streptomyces cinnamonensis).